The sequence spans 173 residues: Nascent polypeptide-associated complex subunit alpha (173 aa).

Residues 21 to 85 form the NAC-A/B domain; the sequence is VVHAEKAQKL…VTVEDMAAQA (65 aa). The tract at residues 89–117 is disordered; that stretch reads NESQKQATETKEEAAITEESGDAQPADTA. The residue at position 122 (serine 122) is a Phosphoserine. Residues 134–171 enclose the UBA domain; sequence VDAKDIELVMAQANVSRAKAVTALKENNSDVVNAIMSL.

The protein belongs to the NAC-alpha family. As to quaternary structure, part of the nascent polypeptide-associated complex (NAC), consisting of ucp15 and btf3. NAC associates with ribosomes via btf3.

The protein resides in the cytoplasm. Its subcellular location is the nucleus. Functionally, component of the nascent polypeptide-associated complex (NAC), a dynamic component of the ribosomal exit tunnel, protecting the emerging polypeptides from interaction with other cytoplasmic proteins to ensure appropriate nascent protein targeting. The NAC complex also promotes mitochondrial protein import by enhancing productive ribosome interactions with the outer mitochondrial membrane and blocks the inappropriate interaction of ribosomes translating non-secretory nascent polypeptides with translocation sites in the membrane of the endoplasmic reticulum. Ucp15 may also be involved in transcription regulation. In Schizosaccharomyces pombe (strain 972 / ATCC 24843) (Fission yeast), this protein is Nascent polypeptide-associated complex subunit alpha (egd2).